Here is a 273-residue protein sequence, read N- to C-terminus: Rhamnulose-1-phosphate aldolase (273 aa).

Glutamate 117 is a catalytic residue. Histidine 140, histidine 142, and histidine 211 together coordinate Zn(2+).

This sequence belongs to the aldolase class II family. RhaD subfamily. The cofactor is Zn(2+).

The protein localises to the cytoplasm. The catalysed reaction is L-rhamnulose 1-phosphate = (S)-lactaldehyde + dihydroxyacetone phosphate. It functions in the pathway carbohydrate degradation; L-rhamnose degradation; glycerone phosphate from L-rhamnose: step 3/3. Its function is as follows. Catalyzes the reversible cleavage of L-rhamnulose-1-phosphate to dihydroxyacetone phosphate (DHAP) and L-lactaldehyde. The protein is Rhamnulose-1-phosphate aldolase of Listeria monocytogenes serotype 4a (strain HCC23).